A 745-amino-acid chain; its full sequence is 5-methyltetrahydropteroyltriglutamate--homocysteine methyltransferase (745 aa).

Residues 16-19 (REWK) and Lys-110 contribute to the 5-methyltetrahydropteroyltri-L-glutamate site. Residues 420–422 (IGS) and Glu-473 contribute to the L-homocysteine site. Residues 420 to 422 (IGS) and Glu-473 each bind L-methionine. Position 550 (Trp-550) interacts with 5-methyltetrahydropteroyltri-L-glutamate. Asp-588 contributes to the L-homocysteine binding site. Asp-588 contacts L-methionine. Glu-594 serves as a coordination point for 5-methyltetrahydropteroyltri-L-glutamate. Residues His-630, Cys-632, and Glu-654 each coordinate Zn(2+). His-683 serves as the catalytic Proton donor. Cys-715 serves as a coordination point for Zn(2+).

It belongs to the vitamin-B12 independent methionine synthase family. Requires Zn(2+) as cofactor.

It carries out the reaction 5-methyltetrahydropteroyltri-L-glutamate + L-homocysteine = tetrahydropteroyltri-L-glutamate + L-methionine. It functions in the pathway amino-acid biosynthesis; L-methionine biosynthesis via de novo pathway; L-methionine from L-homocysteine (MetE route): step 1/1. Catalyzes the transfer of a methyl group from 5-methyltetrahydrofolate to homocysteine resulting in methionine formation. This Streptococcus agalactiae serotype III (strain NEM316) protein is 5-methyltetrahydropteroyltriglutamate--homocysteine methyltransferase.